The following is a 416-amino-acid chain: CCA-adding enzyme (416 aa).

Positions 42 and 45 each coordinate ATP. 2 residues coordinate CTP: S42 and K45. Positions 54, 56, and 107 each coordinate Mg(2+). H130, K150, and Y159 together coordinate ATP. Residues H130, K150, and Y159 each contribute to the CTP site.

Belongs to the tRNA nucleotidyltransferase/poly(A) polymerase family. Archaeal CCA-adding enzyme subfamily. As to quaternary structure, homodimer. It depends on Mg(2+) as a cofactor.

The catalysed reaction is a tRNA precursor + 2 CTP + ATP = a tRNA with a 3' CCA end + 3 diphosphate. The enzyme catalyses a tRNA with a 3' CCA end + 2 CTP + ATP = a tRNA with a 3' CCACCA end + 3 diphosphate. Catalyzes the addition and repair of the essential 3'-terminal CCA sequence in tRNAs without using a nucleic acid template. Adds these three nucleotides in the order of C, C, and A to the tRNA nucleotide-73, using CTP and ATP as substrates and producing inorganic pyrophosphate. tRNA 3'-terminal CCA addition is required both for tRNA processing and repair. Also involved in tRNA surveillance by mediating tandem CCA addition to generate a CCACCA at the 3' terminus of unstable tRNAs. While stable tRNAs receive only 3'-terminal CCA, unstable tRNAs are marked with CCACCA and rapidly degraded. This chain is CCA-adding enzyme, found in Sulfolobus acidocaldarius (strain ATCC 33909 / DSM 639 / JCM 8929 / NBRC 15157 / NCIMB 11770).